Here is a 747-residue protein sequence, read N- to C-terminus: Elongation factor G, mitochondrial (747 aa).

The transit peptide at 1-32 (MTLITRVLNGNLPLRLSTLKAARQLQCGYSSH) directs the protein to the mitochondrion. The region spanning 42-319 (ERIRNIGISA…AVVDYLPNPG (278 aa)) is the tr-type G domain. GTP-binding positions include 51 to 58 (AHIDSGKT), 118 to 122 (DTPGH), and 172 to 175 (NKLD).

This sequence belongs to the TRAFAC class translation factor GTPase superfamily. Classic translation factor GTPase family. EF-G/EF-2 subfamily.

The protein localises to the mitochondrion. It functions in the pathway protein biosynthesis; polypeptide chain elongation. Functionally, mitochondrial GTPase that catalyzes the GTP-dependent ribosomal translocation step during translation elongation. During this step, the ribosome changes from the pre-translocational (PRE) to the post-translocational (POST) state as the newly formed A-site-bound peptidyl-tRNA and P-site-bound deacylated tRNA move to the P and E sites, respectively. Catalyzes the coordinated movement of the two tRNA molecules, the mRNA and conformational changes in the ribosome. Essential during development as it acts as a retrograde signal from mitochondria to the nucleus to slow down cell proliferation if mitochondrial energy output is low. This Drosophila mojavensis (Fruit fly) protein is Elongation factor G, mitochondrial.